Reading from the N-terminus, the 558-residue chain is Rhamnogalacturonase B (558 aa).

The signal sequence occupies residues 1-21 (MLLDKLSVLSFLGLAPIFAAA). Cys42 and Cys68 form a disulfide bridge. Asn145 carries N-linked (GlcNAc...) asparagine glycosylation. Asp219 acts as the Proton donor in catalysis. A disulfide bridge links Cys221 with Cys238. Asn239 and Asn254 each carry an N-linked (GlcNAc...) asparagine glycan. His294 is a catalytic residue. An N-linked (GlcNAc...) asparagine glycan is attached at Asn321. 2 cysteine pairs are disulfide-bonded: Cys344/Cys350 and Cys372/Cys381. Positions 503–526 (VGAQEGSTTSAPSFAAPSGAGNSP) are enriched in low complexity. Residues 503-558 (VGAQEGSTTSAPSFAAPSGAGNSPQGPTGASGFGEKGQQGEQGEQGEQGEQGVCYV) are disordered.

The protein belongs to the glycosyl hydrolase 28 family.

It is found in the secreted. The enzyme catalyses Endohydrolysis of alpha-D-GalA-(1-&gt;2)-alpha-L-Rha glycosidic bond in the rhamnogalacturonan I backbone with initial inversion of anomeric configuration releasing oligosaccharides with beta-D-GalA at the reducing end.. Its function is as follows. Pectinolytic enzymes consist of four classes of enzymes: pectine lyase, polygalacturonase, pectin methylesterase and rhamnogalacturonase. Hydrolyzes alpha-D-galacturonopyranosyl-(1,2)-alpha-L-rhamnopyranosyl linkages in the backbone of the hairy regions of pectins. The polypeptide is Rhamnogalacturonase B (rhgB) (Aspergillus niger).